The following is a 286-amino-acid chain: uncharacterized protein (286 aa).

The active-site Proton donor is the histidine 183. Cysteine 277 serves as the catalytic Nucleophile.

It belongs to the DDAH family.

This is an uncharacterized protein from Bacillus subtilis (strain 168).